We begin with the raw amino-acid sequence, 4158 residues long: Dynein axonemal heavy chain 6 (4158 aa).

Residues 1–1433 are stem; that stretch reads MTFRATDSEF…VARMALSQYT (1433 aa). Residue 192–199 participates in ATP binding; it reads IIRENEHL. A coiled-coil region spans residues 805–859; the sequence is CVHLGSDLEELNNEVNEVKLQAQDPQILDISADQDKIRLILNNLQSVLADLQKRA. AAA regions lie at residues 1434–1655, 1715–1948, 2058–2306, and 2408–2659; these read YGYE…VLVM, STIV…KKCS, KYNR…CVQG, and DYNL…LRRR. ATP is bound by residues 1472 to 1479, 1753 to 1760, 2096 to 2103, and 2447 to 2454; these read GPAGTGKT, GPTGGGKT, GITGVGKS, and GVGGTGKQ. Residues 2676–2961 form a stalk region; that stretch reads SMLSEKRKQI…KTMALTKARL (286 aa). Residues 2901–2996 adopt a coiled-coil conformation; the sequence is KRQKLRAAQA…EEISNITGNV (96 aa). AAA stretches follow at residues 3042–3272 and 3509–3730; these read LGDP…AIKT and LTDF…NLKL.

Belongs to the dynein heavy chain family. As to quaternary structure, the dynein complex consists of at least two heavy chains and a number of intermediate and light chains. Expressed in several tissues, including brain, pituitary, testis and trachea, with highest levels in testis.

The protein localises to the cytoplasm. The protein resides in the cytoskeleton. It localises to the cilium axoneme. Functionally, force generating protein of respiratory cilia. Produces force towards the minus ends of microtubules. Dynein has ATPase activity; the force-producing power stroke is thought to occur on release of ADP. The sequence is that of Dynein axonemal heavy chain 6 from Homo sapiens (Human).